Consider the following 513-residue polypeptide: uncharacterized protein (513 aa).

Residues 11-219 enclose the CYTH domain; sequence HLEVERKFDV…SKLARVLGAT (209 aa). Residues 228-506 enclose the CHAD domain; sequence PQPPADPVHR…LEAALRKLDK (279 aa).

This is an uncharacterized protein from Mycobacterium tuberculosis (strain CDC 1551 / Oshkosh).